The chain runs to 1315 residues: Activating molecule in BECN1-regulated autophagy protein 1A (1315 aa).

WD repeat units lie at residues 50-89 (DSPR…CVHS), 92-132 (GHRR…ESWL), and 134-174 (ESNS…TVVK). Disordered regions lie at residues 294-322 (RVPS…ARTE), 342-409 (FSSV…QRTG), 426-463 (FQSP…SSSI), 502-526 (NNNM…NPPH), 545-610 (SRRW…DTGQ), 630-660 (VYRQ…DNDY), 681-736 (RDSV…PRNA), 985-1134 (HSDG…STGQ), 1181-1208 (GSQT…PESL), and 1286-1315 (LLSS…EYGR). Positions 351-360 (NMRNHSSSSG) are enriched in polar residues. Over residues 378-388 (PGREGGGRHPG) the composition is skewed to basic and acidic residues. Composition is skewed to polar residues over residues 394–409 (SGLN…QRTG) and 426–435 (FQSPVYTSAS). 2 stretches are compositionally biased toward polar residues: residues 552 to 581 (GQPS…QSNE) and 633 to 647 (QSAS…QGAL). Low complexity predominate over residues 696 to 715 (RPLSSNPSSLSPSPVPNAES). Positions 716–725 (SEVDFEEFEE) are enriched in acidic residues. The segment covering 1009 to 1021 (PSSSRSGDRAGSS) has biased composition (low complexity). Over residues 1022 to 1031 (RTDRRSRRDI) the composition is skewed to basic and acidic residues. A compositionally biased stretch (polar residues) spans 1047–1060 (SVTSQGTQTQNQRL). 2 consecutive short sequence motifs (TQT motif) follow at residues 1053 to 1055 (TQT) and 1065 to 1067 (TQT). Residues 1061–1072 (QHAETQTDRDLP) are compositionally biased toward basic and acidic residues. Residues 1076 to 1090 (QQPSTSQGSQVTDAT) show a composition bias toward polar residues. Over residues 1091-1103 (ESLDFETLPEDSG) the composition is skewed to acidic residues. 2 stretches are compositionally biased toward polar residues: residues 1125–1134 (SEPSTDSTGQ) and 1181–1193 (GSQT…NRTR). Positions 1286 to 1307 (LLSSSPSLSPVNNSNYSNSDSS) are enriched in low complexity.

It belongs to the WD repeat AMBRA1 family. In terms of assembly, component of the DCX(AMBRA1) E3 ubiquitin ligase complex.

The protein resides in the endoplasmic reticulum. It localises to the cytoplasm. The protein localises to the cytoskeleton. Its subcellular location is the cytoplasmic vesicle. It is found in the autophagosome. The protein resides in the mitochondrion. It localises to the cytosol. The protein localises to the nucleus. Its subcellular location is the cell junction. It is found in the focal adhesion. It participates in protein modification; protein ubiquitination. Its function is as follows. Substrate-recognition component of a DCX (DDB1-CUL4-X-box) E3 ubiquitin-protein ligase complex involved in cell cycle control and autophagy. The DCX(AMBRA1) complex specifically mediates the polyubiquitination of target proteins. Acts as an upstream master regulator of the transition from G1 to S cell phase: ambra1a specifically recognizes and binds phosphorylated cyclin-D (ccnd1, ccnd2 and ccnd3), leading to cyclin-D ubiquitination by the DCX(AMBRA1) complex and subsequent degradation. Acts as a regulator of Cul5-RING (CRL5) E3 ubiquitin-protein ligase complexes by mediating ubiquitination and degradation of Elongin-C (eloc) component of CRL5 complexes. Acts as a key regulator of autophagy by modulating the BECN1-PIK3C3 complex: controls protein turnover during neuronal development, and regulates normal cell survival and proliferation. In normal conditions, ambra1a is tethered to the cytoskeleton via interaction with dyneins light chains. Upon autophagy induction, ambra1a is released from the cytoskeletal docking site to induce autophagosome nucleation by mediating ubiquitination of proteins involved in autophagy. Also acts as an activator of mitophagy. Required for skeletal muscle development. The chain is Activating molecule in BECN1-regulated autophagy protein 1A from Danio rerio (Zebrafish).